Reading from the N-terminus, the 153-residue chain is Large ribosomal subunit protein bL9 (153 aa).

This sequence belongs to the bacterial ribosomal protein bL9 family.

Functionally, binds to the 23S rRNA. The polypeptide is Large ribosomal subunit protein bL9 (Blochmanniella pennsylvanica (strain BPEN)).